A 151-amino-acid polypeptide reads, in one-letter code: Protein A151R (151 aa).

The protein belongs to the asfivirus A151R family. As to quaternary structure, monomer. Homodimer. Interacts with protein B119L. Interacts with membrane protein E248R. Requires Zn(2+) as cofactor.

May participate in a redox cascade for the formation of disulfide bonds in viral proteins. The chain is Protein A151R from Ornithodoros (relapsing fever ticks).